Consider the following 288-residue polypeptide: Diaminopimelate epimerase (288 aa).

Substrate is bound by residues asparagine 14 and asparagine 67. Cysteine 76 functions as the Proton donor in the catalytic mechanism. Residues 77-78 (GN), asparagine 166, asparagine 199, and 217-218 (ER) contribute to the substrate site. The active-site Proton acceptor is the cysteine 226. Residue 227–228 (GT) participates in substrate binding.

The protein belongs to the diaminopimelate epimerase family. As to quaternary structure, homodimer.

It is found in the cytoplasm. It carries out the reaction (2S,6S)-2,6-diaminopimelate = meso-2,6-diaminopimelate. It participates in amino-acid biosynthesis; L-lysine biosynthesis via DAP pathway; DL-2,6-diaminopimelate from LL-2,6-diaminopimelate: step 1/1. Functionally, catalyzes the stereoinversion of LL-2,6-diaminopimelate (L,L-DAP) to meso-diaminopimelate (meso-DAP), a precursor of L-lysine and an essential component of the bacterial peptidoglycan. This is Diaminopimelate epimerase from Bacillus cereus (strain ATCC 14579 / DSM 31 / CCUG 7414 / JCM 2152 / NBRC 15305 / NCIMB 9373 / NCTC 2599 / NRRL B-3711).